A 944-amino-acid chain; its full sequence is Valine--tRNA ligase (944 aa).

The 'HIGH' region motif lies at 43–53 (PNVTGTLHMGH). A 'KMSKS' region motif is present at residues 550–554 (KMSKS). Lys553 is an ATP binding site. A coiled-coil region spans residues 878–944 (LVDMDAERTR…TGLREQRAKL (67 aa)).

The protein belongs to the class-I aminoacyl-tRNA synthetase family. ValS type 1 subfamily. Monomer.

It localises to the cytoplasm. The catalysed reaction is tRNA(Val) + L-valine + ATP = L-valyl-tRNA(Val) + AMP + diphosphate. Catalyzes the attachment of valine to tRNA(Val). As ValRS can inadvertently accommodate and process structurally similar amino acids such as threonine, to avoid such errors, it has a 'posttransfer' editing activity that hydrolyzes mischarged Thr-tRNA(Val) in a tRNA-dependent manner. This is Valine--tRNA ligase from Xanthomonas campestris pv. campestris (strain 8004).